Consider the following 96-residue polypeptide: MKKPSQLSATILTIFVILAIGVMVKETLGQAPSTCFEALKDASKGASCDSELCASLCKKKSGGGVGTCRTKTTQPSKGQPECHCRFWCKSDGTPYK.

The signal sequence occupies residues 1 to 29; it reads MKKPSQLSATILTIFVILAIGVMVKETLG. Cystine bridges form between Cys35–Cys88, Cys48–Cys68, Cys53–Cys82, and Cys57–Cys84.

It belongs to the DEFL family.

It is found in the secreted. In Arabidopsis thaliana (Mouse-ear cress), this protein is Defensin-like protein 151 (LCR17).